Reading from the N-terminus, the 446-residue chain is Phosphoglucosamine mutase (446 aa).

S100 acts as the Phosphoserine intermediate in catalysis. Residues S100, D241, D243, and D245 each coordinate Mg(2+). S100 bears the Phosphoserine mark.

The protein belongs to the phosphohexose mutase family. Mg(2+) serves as cofactor. Post-translationally, activated by phosphorylation.

The enzyme catalyses alpha-D-glucosamine 1-phosphate = D-glucosamine 6-phosphate. Catalyzes the conversion of glucosamine-6-phosphate to glucosamine-1-phosphate. In Methylobacterium nodulans (strain LMG 21967 / CNCM I-2342 / ORS 2060), this protein is Phosphoglucosamine mutase.